Reading from the N-terminus, the 479-residue chain is CBL-interacting serine/threonine-protein kinase 10 (479 aa).

The Protein kinase domain occupies 12–266; that stretch reads YDVGRLLGQG…IARIRESSWF (255 aa). Residues 18-26 and Lys-41 each bind ATP; that span reads LGQGTFAKV. Asp-134 serves as the catalytic Proton acceptor. An activation loop region spans residues 152–181; sequence DFGLSALADCKRQDGLLHTTCGTPAYVAPE. Residue Ser-156 is modified to Phosphoserine. Thr-170 is modified (phosphothreonine). The tract at residues 286–323 is disordered; it reads SVEAGTAGTNENGAGPSENGAGPSENGDRVTEENHTDE. Over residues 288–300 the composition is skewed to low complexity; the sequence is EAGTAGTNENGAG. Positions 311 to 323 are enriched in basic and acidic residues; that stretch reads NGDRVTEENHTDE. The region spanning 322 to 346 is the NAF domain; it reads DEPTNLNAFDLIALSAGFDLAGLFG. Residues 350–379 are PPI; sequence KRESRFTSQKPASVIISKLEEVAQRLKLSI. Positions 456-479 are disordered; that stretch reads SQQETEYQQQQQQEQQEQEEPLKF. Low complexity predominate over residues 457-470; that stretch reads QQETEYQQQQQQEQ.

This sequence belongs to the protein kinase superfamily. CAMK Ser/Thr protein kinase family. SNF1 subfamily. Interacts with CBL4/SOS3. Requires Mn(2+) as cofactor. In terms of tissue distribution, mostly expressed in roots.

It catalyses the reaction L-seryl-[protein] + ATP = O-phospho-L-seryl-[protein] + ADP + H(+). The enzyme catalyses L-threonyl-[protein] + ATP = O-phospho-L-threonyl-[protein] + ADP + H(+). In terms of biological role, CIPK serine-threonine protein kinases interact with CBL proteins. Binding of a CBL protein to the regulatory NAF domain of CIPK protein lead to the activation of the kinase in a calcium-dependent manner. The polypeptide is CBL-interacting serine/threonine-protein kinase 10 (CIPK10) (Arabidopsis thaliana (Mouse-ear cress)).